A 195-amino-acid chain; its full sequence is 3-isopropylmalate dehydratase small subunit (195 aa).

Belongs to the LeuD family. LeuD type 1 subfamily. In terms of assembly, heterodimer of LeuC and LeuD.

It carries out the reaction (2R,3S)-3-isopropylmalate = (2S)-2-isopropylmalate. The protein operates within amino-acid biosynthesis; L-leucine biosynthesis; L-leucine from 3-methyl-2-oxobutanoate: step 2/4. Its function is as follows. Catalyzes the isomerization between 2-isopropylmalate and 3-isopropylmalate, via the formation of 2-isopropylmaleate. This is 3-isopropylmalate dehydratase small subunit from Parafrankia sp. (strain EAN1pec).